The sequence spans 62 residues: uncharacterized protein (62 aa).

A helical membrane pass occupies residues 37–57 (FILGVILLGVIIESITLLVVY).

It is found in the membrane. This is an uncharacterized protein from Dictyostelium discoideum (Social amoeba).